The chain runs to 169 residues: 3-hydroxyanthranilate 3,4-dioxygenase (169 aa).

R44 is an O2 binding site. H48, E54, and H92 together coordinate Fe cation. Position 54 (E54) interacts with substrate. Residues R96 and E106 each contribute to the substrate site. A divalent metal cation-binding residues include C121, C124, C158, and C160.

It belongs to the 3-HAO family. It depends on Fe(2+) as a cofactor.

The protein localises to the cytoplasm. The catalysed reaction is 3-hydroxyanthranilate + O2 = (2Z,4Z)-2-amino-3-carboxymuconate 6-semialdehyde. It participates in cofactor biosynthesis; NAD(+) biosynthesis; quinolinate from L-kynurenine: step 3/3. In terms of biological role, catalyzes the oxidative ring opening of 3-hydroxyanthranilate to 2-amino-3-carboxymuconate semialdehyde, which spontaneously cyclizes to quinolinate. This chain is 3-hydroxyanthranilate 3,4-dioxygenase, found in Meyerozyma guilliermondii (strain ATCC 6260 / CBS 566 / DSM 6381 / JCM 1539 / NBRC 10279 / NRRL Y-324) (Yeast).